A 965-amino-acid chain; its full sequence is MTALIRIRGARTHNLKNLDLDLPRNTLIVITGLSGSGKSSLAFDTIYAEGQRRYVESLSAYARQFLSVMEKPDLDQIEGLSPAISIEQKSTSHNPRSTVGTITEIYDYLRLLYARVGQPRCPDHHYPLEAQTVSQMVDHVLTLDPEQRYMLLAPVVRERKGEHTQVFEQLRAQGFVRVRVDGELYEIDVVPTLTLRQKHTIEAVIDRFRPREDIKQRLAESFETALKLGNGMASVQTLDTTTTTPHLFSSKYSCPVCDYSLPELEPRLFSFNAPMGACPACNGLGVTEFFDPAKVVIHPDLSLSAGAVRGWDRRNAYYFQLIASLAKHYTFDIDASWESLPEEIRHTILFGSGDEQINFIYLTEAGGRTKRKHRFEGIVPNLERRYRETESAAVREELAKYVSTRTCPECGGTRLNRAARNVFVADRTLPELTVLPINDALEFFKTLRLPGWRGEIAIKIVKEIGERLGFLVDVGLDYLTLERKADTLSGGEAQRIRLASQIGAGLVGVMYVLDEPSIGLHQRDNERLLGTLTRLRDLGNTVIVVEHDEDAIRQADHILDIGPGAGVHGGEICAQGSLEQIMAAPRSLTGQYLSGRRRIEIPKQRHPPNATKMLHLRGACGNNLKGVNLDIPEGLFTCITGVSGSGKSTLINDTLFTLAANEINGASHPIAPYASVDGLELFDKVVDIDQSPIGRTPRSNPATYTGMFTPLRELFAQVPEARARGYSPGRFSFNVRGGRCEACEGDGLIKVEMHFLPDVYVPCDVCHGKRYNRETLEIRYKGYNINDVLEMTVEDALKLFEAVPAIARKLETLVDVGLSYLKLGQSATTLSGGEAQRVKLSKELSRRDTGRTLYILDEPTTGLHFYDIEALLAVLHKLRDAGNTVIVIEHNLDVIKTADWVIDLGPEGGGRGGEILVAGTPEAVAAHPHSHTGHFLAKLLPPKDVSNCGHRDPGEEVDIAQTVHR.

32 to 39 (GLSGSGKS) contributes to the ATP binding site. A C4-type zinc finger spans residues 254 to 281 (CPVCDYSLPELEPRLFSFNAPMGACPAC). ABC transporter domains lie at 311 to 588 (WDRR…PRSL) and 608 to 937 (PNAT…HFLA). 641 to 648 (GVSGSGKS) is an ATP binding site. The segment at 740-766 (CEACEGDGLIKVEMHFLPDVYVPCDVC) adopts a C4-type zinc-finger fold.

The protein belongs to the ABC transporter superfamily. UvrA family. Forms a heterotetramer with UvrB during the search for lesions.

The protein resides in the cytoplasm. The UvrABC repair system catalyzes the recognition and processing of DNA lesions. UvrA is an ATPase and a DNA-binding protein. A damage recognition complex composed of 2 UvrA and 2 UvrB subunits scans DNA for abnormalities. When the presence of a lesion has been verified by UvrB, the UvrA molecules dissociate. The chain is UvrABC system protein A from Xylella fastidiosa (strain 9a5c).